A 67-amino-acid polypeptide reads, in one-letter code: Probable tautomerase K2 (67 aa).

The active-site Proton acceptor; via imino nitrogen is the proline 2.

It belongs to the 4-oxalocrotonate tautomerase family.

The protein is Probable tautomerase K2 of Dickeya dadantii (strain 3937) (Erwinia chrysanthemi (strain 3937)).